Here is a 190-residue protein sequence, read N- to C-terminus: Protein LZIC (190 aa).

Residues 6–64 (TTETSKLKQNLEEQLDRLMQQLQDLEECREELDADEYEETKKETLEQLSEINDSLKKIM) are a coiled coil.

Belongs to the CTNNBIP1 family. Does not interact with CTNNB1.

The protein is Protein LZIC (LZIC) of Gallus gallus (Chicken).